A 302-amino-acid polypeptide reads, in one-letter code: Acetaldehyde dehydrogenase (302 aa).

The Acyl-thioester intermediate role is filled by Cys-131. Residues 162-170 (SAGPGTRKN) and Asn-273 contribute to the NAD(+) site.

This sequence belongs to the acetaldehyde dehydrogenase family.

The enzyme catalyses acetaldehyde + NAD(+) + CoA = acetyl-CoA + NADH + H(+). This Acidovorax sp. (strain JS42) protein is Acetaldehyde dehydrogenase.